The chain runs to 545 residues: Glucose-6-phosphate isomerase (545 aa).

Glutamate 351 acts as the Proton donor in catalysis. Catalysis depends on residues histidine 382 and lysine 510.

Belongs to the GPI family.

The protein localises to the cytoplasm. It carries out the reaction alpha-D-glucose 6-phosphate = beta-D-fructose 6-phosphate. The protein operates within carbohydrate biosynthesis; gluconeogenesis. Its pathway is carbohydrate degradation; glycolysis; D-glyceraldehyde 3-phosphate and glycerone phosphate from D-glucose: step 2/4. In terms of biological role, catalyzes the reversible isomerization of glucose-6-phosphate to fructose-6-phosphate. The chain is Glucose-6-phosphate isomerase from Shewanella baltica (strain OS195).